Consider the following 202-residue polypeptide: Protein TIFY 11g (202 aa).

A compositionally biased stretch (gly residues) spans 1 to 11; it reads MDAVGAAGGGA. A disordered region spans residues 1–31; sequence MDAVGAAGGGAMLPAAARRGQPPQPPCMTTA. The span at 12 to 21 shows a compositional bias: low complexity; that stretch reads MLPAAARRGQ. The Tify domain occupies 101–136; that stretch reads ATAPTAPLTIVYGGQVLVFEHYTAEAAEKLVQRTQH. A Jas motif is present at residues 185–200; that stretch reads PIARKASLQRFLQKRK. The short motif at 187–194 is the Nuclear localization signal element; the sequence is ARKASLQR.

This sequence belongs to the TIFY/JAZ family. Ubiquitinated. Targeted for degradation by the SCF(COI1) E3 ubiquitin ligase-proteasome pathway during jasmonate signaling.

The protein localises to the nucleus. In terms of biological role, repressor of jasmonate responses. The protein is Protein TIFY 11g of Oryza sativa subsp. japonica (Rice).